The chain runs to 50 residues: Putative protein HokG (50 aa).

Residues 5-25 (YALVAIIVLCCTVLGFTLMVG) form a helical membrane-spanning segment.

Belongs to the Hok/Gef family.

It localises to the cell inner membrane. Its function is as follows. Toxic component of a type I toxin-antitoxin (TA) system. When overexpressed kills cells within minutes; causes collapse of the transmembrane potential and arrest of respiration. Its toxic effect is probably neutralized by an antisense antitoxin Sok RNA. The chain is Putative protein HokG (hokG) from Escherichia coli O157:H7.